A 471-amino-acid polypeptide reads, in one-letter code: Alpha-galactosidase 6 (471 aa).

The first 18 residues, 1–18 (MFAFYFLTACISLKGVFG), serve as a signal peptide directing secretion. Cys-42 and Cys-74 are joined by a disulfide. Positions 72 and 73 each coordinate substrate. Residue Asn-105 is glycosylated (N-linked (GlcNAc...) asparagine). A disulfide bridge links Cys-121 with Cys-151. Lys-147 serves as a coordination point for substrate. Catalysis depends on Asp-149, which acts as the Nucleophile. The N-linked (GlcNAc...) asparagine glycan is linked to Asn-175. Arg-205 is a binding site for substrate. The active-site Proton donor is Asp-209. Disulfide bonds link Cys-221–Cys-237 and Cys-223–Cys-230. Residue Gln-251 coordinates substrate. N-linked (GlcNAc...) asparagine glycosylation is found at Asn-270, Asn-370, Asn-403, Asn-422, Asn-435, and Asn-454.

This sequence belongs to the glycosyl hydrolase 27 family. In terms of assembly, homotetramer.

The protein resides in the secreted. It catalyses the reaction Hydrolysis of terminal, non-reducing alpha-D-galactose residues in alpha-D-galactosides, including galactose oligosaccharides, galactomannans and galactolipids.. The sequence is that of Alpha-galactosidase 6 (MEL6) from Saccharomyces cerevisiae (Baker's yeast).